The chain runs to 113 residues: Beta-microseminoprotein (113 aa).

The first 20 residues, 1–20 (MEAWLGSLLFLATMVIASKA), serve as a signal peptide directing secretion. 5 disulfides stabilise this stretch: Cys-22-Cys-69, Cys-38-Cys-61, Cys-56-Cys-92, Cys-59-Cys-68, and Cys-83-Cys-106.

Belongs to the beta-microseminoprotein family. Homodimer; Interacts with PI16.

The protein localises to the secreted. In Mus musculus (Mouse), this protein is Beta-microseminoprotein (Msmb).